The primary structure comprises 290 residues: 4-hydroxy-tetrahydrodipicolinate synthase (290 aa).

Thr44 contacts pyruvate. The active-site Proton donor/acceptor is Tyr132. The Schiff-base intermediate with substrate role is filled by Lys160. Ile202 lines the pyruvate pocket.

The protein belongs to the DapA family. As to quaternary structure, homotetramer; dimer of dimers.

Its subcellular location is the cytoplasm. The enzyme catalyses L-aspartate 4-semialdehyde + pyruvate = (2S,4S)-4-hydroxy-2,3,4,5-tetrahydrodipicolinate + H2O + H(+). It participates in amino-acid biosynthesis; L-lysine biosynthesis via DAP pathway; (S)-tetrahydrodipicolinate from L-aspartate: step 3/4. In terms of biological role, catalyzes the condensation of (S)-aspartate-beta-semialdehyde [(S)-ASA] and pyruvate to 4-hydroxy-tetrahydrodipicolinate (HTPA). This Pelobacter propionicus (strain DSM 2379 / NBRC 103807 / OttBd1) protein is 4-hydroxy-tetrahydrodipicolinate synthase.